We begin with the raw amino-acid sequence, 268 residues long: Small ribosomal subunit protein uS3 (268 aa).

The 71-residue stretch at 40-110 (IRNLFFINYR…KLDLTINEIG (71 aa)) folds into the KH type-2 domain.

This sequence belongs to the universal ribosomal protein uS3 family. As to quaternary structure, part of the 30S ribosomal subunit. Forms a tight complex with proteins S10 and S14.

Its function is as follows. Binds the lower part of the 30S subunit head. Binds mRNA in the 70S ribosome, positioning it for translation. This chain is Small ribosomal subunit protein uS3, found in Mycoplasma genitalium (strain ATCC 33530 / DSM 19775 / NCTC 10195 / G37) (Mycoplasmoides genitalium).